The chain runs to 877 residues: Phosphoenolpyruvate carboxylase (877 aa).

Residues His138 and Lys544 contribute to the active site.

The protein belongs to the PEPCase type 1 family. The cofactor is Mg(2+).

It catalyses the reaction oxaloacetate + phosphate = phosphoenolpyruvate + hydrogencarbonate. Its function is as follows. Forms oxaloacetate, a four-carbon dicarboxylic acid source for the tricarboxylic acid cycle. This Vibrio vulnificus (strain CMCP6) protein is Phosphoenolpyruvate carboxylase.